Reading from the N-terminus, the 217-residue chain is MTKIKICGITNPDDAIASCTAGADALGFNFSKASPRYIQPETALSIIEKLPPFISCVGVFVEQEPHEVNQICNLCRLDHAQLHAERYTAEKAVAVRGAKVIRVFRTGPDFTIDVVRTFAEETGITSFLFDAYRPGQPGGTGHVIEQQLAQKIFRETEHIGFGILAGGLKPENVAEATSTVRPYAVDTASGVEESPGRKNHQKIRDFVSAVHRSAELL.

It belongs to the TrpF family.

It catalyses the reaction N-(5-phospho-beta-D-ribosyl)anthranilate = 1-(2-carboxyphenylamino)-1-deoxy-D-ribulose 5-phosphate. It functions in the pathway amino-acid biosynthesis; L-tryptophan biosynthesis; L-tryptophan from chorismate: step 3/5. The sequence is that of N-(5'-phosphoribosyl)anthranilate isomerase from Chlorobium phaeobacteroides (strain BS1).